A 513-amino-acid chain; its full sequence is GMP synthase [glutamine-hydrolyzing] (513 aa).

Residues 8 to 198 (KIIVLDYGSQ…ALNTCGAKGN (191 aa)) form the Glutamine amidotransferase type-1 domain. C85 acts as the Nucleophile in catalysis. Catalysis depends on residues H172 and E174. Residues 199–388 (WSMENFIDMQ…LGMPDEIVWR (190 aa)) form the GMPS ATP-PPase domain. 226–232 (SGGVDSS) lines the ATP pocket.

In terms of assembly, homodimer.

It carries out the reaction XMP + L-glutamine + ATP + H2O = GMP + L-glutamate + AMP + diphosphate + 2 H(+). Its pathway is purine metabolism; GMP biosynthesis; GMP from XMP (L-Gln route): step 1/1. In terms of biological role, catalyzes the synthesis of GMP from XMP. This is GMP synthase [glutamine-hydrolyzing] from Lactococcus lactis subsp. cremoris (strain SK11).